The chain runs to 448 residues: Probable glycine dehydrogenase (decarboxylating) subunit 1 (448 aa).

This sequence belongs to the GcvP family. N-terminal subunit subfamily. In terms of assembly, the glycine cleavage system is composed of four proteins: P, T, L and H. In this organism, the P 'protein' is a heterodimer of two subunits.

It carries out the reaction N(6)-[(R)-lipoyl]-L-lysyl-[glycine-cleavage complex H protein] + glycine + H(+) = N(6)-[(R)-S(8)-aminomethyldihydrolipoyl]-L-lysyl-[glycine-cleavage complex H protein] + CO2. The glycine cleavage system catalyzes the degradation of glycine. The P protein binds the alpha-amino group of glycine through its pyridoxal phosphate cofactor; CO(2) is released and the remaining methylamine moiety is then transferred to the lipoamide cofactor of the H protein. The protein is Probable glycine dehydrogenase (decarboxylating) subunit 1 of Bacillus velezensis (strain DSM 23117 / BGSC 10A6 / LMG 26770 / FZB42) (Bacillus amyloliquefaciens subsp. plantarum).